The chain runs to 594 residues: UvrABC system protein C (594 aa).

The 78-residue stretch at 14–91 (DSPGCYLHKD…IQENMPKYNI (78 aa)) folds into the GIY-YIG domain. The region spanning 196 to 231 (DKIIDDLRSKMLEASHNQEFERAAEYRDLISGIATM) is the UVR domain.

It belongs to the UvrC family. As to quaternary structure, interacts with UvrB in an incision complex.

The protein resides in the cytoplasm. Functionally, the UvrABC repair system catalyzes the recognition and processing of DNA lesions. UvrC both incises the 5' and 3' sides of the lesion. The N-terminal half is responsible for the 3' incision and the C-terminal half is responsible for the 5' incision. This is UvrABC system protein C from Streptococcus equi subsp. equi (strain 4047).